The primary structure comprises 388 residues: Succinyl-diaminopimelate desuccinylase (388 aa).

Residue histidine 72 coordinates Zn(2+). The active site involves aspartate 74. Aspartate 105 provides a ligand contact to Zn(2+). Glutamate 139 (proton acceptor) is an active-site residue. Residues glutamate 140, glutamate 168, and histidine 353 each contribute to the Zn(2+) site.

This sequence belongs to the peptidase M20A family. DapE subfamily. As to quaternary structure, homodimer. Zn(2+) is required as a cofactor. Co(2+) serves as cofactor.

The enzyme catalyses N-succinyl-(2S,6S)-2,6-diaminopimelate + H2O = (2S,6S)-2,6-diaminopimelate + succinate. Its pathway is amino-acid biosynthesis; L-lysine biosynthesis via DAP pathway; LL-2,6-diaminopimelate from (S)-tetrahydrodipicolinate (succinylase route): step 3/3. Functionally, catalyzes the hydrolysis of N-succinyl-L,L-diaminopimelic acid (SDAP), forming succinate and LL-2,6-diaminopimelate (DAP), an intermediate involved in the bacterial biosynthesis of lysine and meso-diaminopimelic acid, an essential component of bacterial cell walls. The protein is Succinyl-diaminopimelate desuccinylase of Orientia tsutsugamushi (strain Ikeda) (Rickettsia tsutsugamushi).